The chain runs to 386 residues: Succinate--CoA ligase [ADP-forming] subunit beta (386 aa).

Residues 9 to 244 (KALLRAAGIK…TTQEDHRETQ (236 aa)) form the ATP-grasp domain. ATP contacts are provided by residues K46, 53 to 55 (GRG), E100, and R103. N199 and D213 together coordinate Mg(2+). Substrate is bound by residues N264 and 321–323 (GIV).

Belongs to the succinate/malate CoA ligase beta subunit family. As to quaternary structure, heterotetramer of two alpha and two beta subunits. The cofactor is Mg(2+).

The enzyme catalyses succinate + ATP + CoA = succinyl-CoA + ADP + phosphate. It carries out the reaction GTP + succinate + CoA = succinyl-CoA + GDP + phosphate. The protein operates within carbohydrate metabolism; tricarboxylic acid cycle; succinate from succinyl-CoA (ligase route): step 1/1. Functionally, succinyl-CoA synthetase functions in the citric acid cycle (TCA), coupling the hydrolysis of succinyl-CoA to the synthesis of either ATP or GTP and thus represents the only step of substrate-level phosphorylation in the TCA. The beta subunit provides nucleotide specificity of the enzyme and binds the substrate succinate, while the binding sites for coenzyme A and phosphate are found in the alpha subunit. The chain is Succinate--CoA ligase [ADP-forming] subunit beta from Dichelobacter nodosus (strain VCS1703A).